The following is a 436-amino-acid chain: Methanethiol oxidase (436 aa).

An N-terminal signal peptide occupies residues 1-24; sequence MKRREFGALAAGALAMGLPFRAFA.

Belongs to the selenium-binding protein family.

It localises to the periplasm. It catalyses the reaction methanethiol + O2 + H2O = hydrogen sulfide + formaldehyde + H2O2 + H(+). It functions in the pathway organosulfur degradation. Functionally, catalyzes the oxidation of methanethiol. This chain is Methanethiol oxidase, found in Ruegeria pomeroyi (strain ATCC 700808 / DSM 15171 / DSS-3) (Silicibacter pomeroyi).